The following is a 136-amino-acid chain: Probable intron-encoded DNA endonuclease 3 (136 aa).

This sequence belongs to the LAGLIDADG endonuclease family.

The protein localises to the mitochondrion. Mitochondrial DNA endonuclease involved in intron homing. The polypeptide is Probable intron-encoded DNA endonuclease 3 (hegI3) (Mycosarcoma maydis (Corn smut fungus)).